The following is an 877-amino-acid chain: Phosphoenolpyruvate carboxylase (877 aa).

Active-site residues include H138 and K544.

Belongs to the PEPCase type 1 family. The cofactor is Mg(2+).

The enzyme catalyses oxaloacetate + phosphate = phosphoenolpyruvate + hydrogencarbonate. Its function is as follows. Forms oxaloacetate, a four-carbon dicarboxylic acid source for the tricarboxylic acid cycle. The sequence is that of Phosphoenolpyruvate carboxylase from Vibrio vulnificus (strain CMCP6).